A 324-amino-acid polypeptide reads, in one-letter code: Acetyl-coenzyme A carboxylase carboxyl transferase subunit alpha (324 aa).

In terms of domain architecture, CoA carboxyltransferase C-terminal spans 44–298 (RFQNQLVKLQ…KKELTEQLDS (255 aa)).

The protein belongs to the AccA family. Acetyl-CoA carboxylase is a heterohexamer composed of biotin carboxyl carrier protein (accB), biotin carboxylase (accC) and two subunits each of ACCase subunit alpha (accA) and ACCase subunit beta (accD).

It localises to the plastid. Its subcellular location is the chloroplast. The enzyme catalyses N(6)-carboxybiotinyl-L-lysyl-[protein] + acetyl-CoA = N(6)-biotinyl-L-lysyl-[protein] + malonyl-CoA. It functions in the pathway lipid metabolism; malonyl-CoA biosynthesis; malonyl-CoA from acetyl-CoA: step 1/1. In terms of biological role, component of the acetyl coenzyme A carboxylase (ACC) complex. First, biotin carboxylase catalyzes the carboxylation of biotin on its carrier protein (BCCP) and then the CO(2) group is transferred by the carboxyltransferase to acetyl-CoA to form malonyl-CoA. The chain is Acetyl-coenzyme A carboxylase carboxyl transferase subunit alpha from Pyropia yezoensis (Susabi-nori).